The sequence spans 167 residues: Large ribosomal subunit protein uL23 (167 aa).

Residues Met-1–Lys-118 are large ribosomal subunit protein uL23. Disordered stretches follow at residues Phe-91–Lys-112 and Lys-136–Asn-167. Basic and acidic residues-rich tracts occupy residues Gln-97 to Lys-112 and Lys-136 to Asn-157. Residues Lys-119–Asn-167 are unknown. Over residues Gln-158–Asn-167 the composition is skewed to polar residues.

This sequence belongs to the universal ribosomal protein uL23 family. In terms of assembly, part of the 50S ribosomal subunit. Contacts protein L29, and trigger factor when it is bound to the ribosome.

Its function is as follows. One of the early assembly proteins it binds 23S rRNA. One of the proteins that surrounds the polypeptide exit tunnel on the outside of the ribosome. Forms the main docking site for trigger factor binding to the ribosome. In Mesomycoplasma hyopneumoniae (strain J / ATCC 25934 / NCTC 10110) (Mycoplasma hyopneumoniae), this protein is Large ribosomal subunit protein uL23.